The chain runs to 412 residues: [Pyruvate dehydrogenase (acetyl-transferring)] kinase isozyme 4, mitochondrial (412 aa).

The Histidine kinase domain occupies 138–368 (ILEYKDTCTV…DAIIYLKALS (231 aa)). ATP contacts are provided by residues 254–261 (ELFKNAMR), Asp-293, 312–313 (ST), and 329–334 (GFGYGL).

Belongs to the PDK/BCKDK protein kinase family. Homodimer. Interacts with the pyruvate dehydrogenase complex subunit DLAT, and is part of the multimeric pyruvate dehydrogenase complex that contains multiple copies of pyruvate dehydrogenase (E1), dihydrolipoamide acetyltransferase (DLAT, E2) and lipoamide dehydrogenase (DLD, E3). Detected in skeletal muscle and heart.

It is found in the mitochondrion matrix. The catalysed reaction is L-seryl-[pyruvate dehydrogenase E1 alpha subunit] + ATP = O-phospho-L-seryl-[pyruvate dehydrogenase E1 alpha subunit] + ADP + H(+). Its function is as follows. Kinase that plays a key role in regulation of glucose and fatty acid metabolism and homeostasis via phosphorylation of the pyruvate dehydrogenase subunits PDHA1 and PDHA2. This inhibits pyruvate dehydrogenase activity, and thereby regulates metabolite flux through the tricarboxylic acid cycle, down-regulates aerobic respiration and inhibits the formation of acetyl-coenzyme A from pyruvate. Inhibition of pyruvate dehydrogenase decreases glucose utilization and increases fat metabolism in response to prolonged fasting and starvation. Plays an important role in maintaining normal blood glucose levels under starvation, and is involved in the insulin signaling cascade. Via its regulation of pyruvate dehydrogenase activity, plays an important role in maintaining normal blood pH and in preventing the accumulation of ketone bodies under starvation. In the fed state, mediates cellular responses to glucose levels and to a high-fat diet. Regulates both fatty acid oxidation and de novo fatty acid biosynthesis. Plays a role in the generation of reactive oxygen species. Protects detached epithelial cells against anoikis. Plays a role in cell proliferation via its role in regulating carbohydrate and fatty acid metabolism. This chain is [Pyruvate dehydrogenase (acetyl-transferring)] kinase isozyme 4, mitochondrial (PDK4), found in Ictidomys tridecemlineatus (Thirteen-lined ground squirrel).